The primary structure comprises 81 residues: UPF0180 protein RBAM_013970 (81 aa).

This sequence belongs to the UPF0180 family.

This is UPF0180 protein RBAM_013970 from Bacillus velezensis (strain DSM 23117 / BGSC 10A6 / LMG 26770 / FZB42) (Bacillus amyloliquefaciens subsp. plantarum).